A 212-amino-acid polypeptide reads, in one-letter code: Major fimbrial subunit (212 aa).

Positions 1–18 (MKKTLLGSLILLAFATNA) are cleaved as a signal peptide. An intrachain disulfide couples C42 to C82.

This sequence belongs to the fimbrial protein family.

It localises to the fimbrium. Mediates adherence to oropharyngeal epithelial cells. Helps the airway colonization process. This Haemophilus influenzae protein is Major fimbrial subunit (hifA).